The primary structure comprises 521 residues: Biotinidase (521 aa).

The first 25 residues, 1 to 25 (MSGARTAHALVFLLGCSALALGVCS), serve as a signal peptide directing secretion. Positions 50–329 (NPLELSSRQQ…QGLVGTENTT (280 aa)) constitute a CN hydrolase domain. Glu90 serves as the catalytic Proton acceptor. Residues Asn128 and Asn181 are each glycosylated (N-linked (GlcNAc...) asparagine). Lys190 functions as the Proton donor in the catalytic mechanism. Cys223 functions as the Nucleophile in the catalytic mechanism. Residue Asn380 is glycosylated (N-linked (GlcNAc...) asparagine).

This sequence belongs to the carbon-nitrogen hydrolase superfamily. BTD/VNN family.

It localises to the secreted. It is found in the extracellular space. The enzyme catalyses biocytin + H2O = biotin + L-lysine. The catalysed reaction is biotin amide + H2O = biotin + NH4(+). Catalytic release of biotin from biocytin, the product of biotin-dependent carboxylases degradation. In Rattus norvegicus (Rat), this protein is Biotinidase.